Reading from the N-terminus, the 213-residue chain is Superoxide dismutase [Mn] (213 aa).

Residues histidine 27, histidine 82, aspartate 168, and histidine 172 each coordinate Mn(2+).

Belongs to the iron/manganese superoxide dismutase family. In terms of assembly, homodimer. The cofactor is Mn(2+).

It catalyses the reaction 2 superoxide + 2 H(+) = H2O2 + O2. Destroys superoxide anion radicals which are normally produced within the cells and which are toxic to biological systems. The sequence is that of Superoxide dismutase [Mn] (sodA) from Mannheimia haemolytica (Pasteurella haemolytica).